Consider the following 336-residue polypeptide: MIYQSLFSHQASLPSEQLPFTVILLNDWGLIRVTGKDRVKYLQGQITLDVPLLKENQHILGAHCDPKGKILSTVRLFHYLKGLAFITRKSLLHDELMELRKYAVFSKVEIDIAESTVLLGIAGDQARKVLKNCFEKLPTETEPVVHEDDYSLLHFSSPRERFLLVSQAFKEGDFLIQKLQDQAVFRSSEQWLALDIESGFPIIDAKNKTQFIPQAANLKALGGISFTKGCYTGQEVVARTEYRGVNKKALYWLTGKACRVPDVGEALEIQMEEDYRRTGVVLAAVKLQDGSLWVQAILNHDFQKDSILRVKGDENGRLMISHRSFKKFEPSSNPIA.

Positions 28 and 191 each coordinate folate.

This sequence belongs to the tRNA-modifying YgfZ family.

It is found in the cytoplasm. Functionally, folate-binding protein involved in regulating the level of ATP-DnaA and in the modification of some tRNAs. It is probably a key factor in regulatory networks that act via tRNA modification, such as initiation of chromosomal replication. The polypeptide is tRNA-modifying protein YgfZ (Hamiltonella defensa subsp. Acyrthosiphon pisum (strain 5AT)).